A 246-amino-acid polypeptide reads, in one-letter code: Probable transcriptional regulatory protein GK2594 (246 aa).

This sequence belongs to the TACO1 family.

The protein localises to the cytoplasm. In Geobacillus kaustophilus (strain HTA426), this protein is Probable transcriptional regulatory protein GK2594.